A 496-amino-acid chain; its full sequence is Maturase K (496 aa).

Belongs to the intron maturase 2 family. MatK subfamily.

The protein localises to the plastid. It localises to the chloroplast. Usually encoded in the trnK tRNA gene intron. Probably assists in splicing its own and other chloroplast group II introns. The polypeptide is Maturase K (Paeonia lactiflora (Chinese peony)).